The primary structure comprises 255 residues: Hydroxylmethylpyrimidine kinase (255 aa).

Residues G18, Q43, and N110 each contribute to the pyridoxal 5'-phosphate site. A 4-amino-5-hydroxymethyl-2-methylpyrimidine-binding site is contributed by Q43. Residues C195 and C207 are joined by a disulfide bond. S208 is a binding site for pyridoxal 5'-phosphate.

Belongs to the ThiD family. In terms of assembly, homodimer. Post-translationally, crystals show a disulfide bond between Cys-195 and Cys-207. This disulfide is possibly an artifact of the purification and crystallization conditions. However, as it is adjacent to the conserved GSGC of the oxyanion hole, this disulfide may help to orient the backbone amides toward the oxanion intermediate.

It carries out the reaction 4-amino-5-hydroxymethyl-2-methylpyrimidine + ATP = 4-amino-2-methyl-5-(phosphooxymethyl)pyrimidine + ADP + H(+). Its pathway is cofactor biosynthesis; thiamine diphosphate biosynthesis. Inhibited by pyridoxal phosphate at high micromolar concentrations. Functionally, catalyzes the phosphorylation of hydroxymethylpyrimidine (HMP) to hydroxymethylpyrimidine phosphate (HMP-P). Unlike other HMPKs, it cannot catalyze the phosphorylation of HMP-P to generate the diphosphate HMP-PP. Shows no activity with pyridoxal, pyridoxamine or pyridoxine. Does not show phosphatase activity. The protein is Hydroxylmethylpyrimidine kinase of Acinetobacter baumannii (strain IS-123).